The following is a 304-amino-acid chain: Acetylglutamate kinase (304 aa).

Residues glycine 75–glycine 76, arginine 97, and asparagine 202 contribute to the substrate site.

Belongs to the acetylglutamate kinase family. ArgB subfamily.

Its subcellular location is the cytoplasm. The enzyme catalyses N-acetyl-L-glutamate + ATP = N-acetyl-L-glutamyl 5-phosphate + ADP. Its pathway is amino-acid biosynthesis; L-arginine biosynthesis; N(2)-acetyl-L-ornithine from L-glutamate: step 2/4. Catalyzes the ATP-dependent phosphorylation of N-acetyl-L-glutamate. This is Acetylglutamate kinase from Parvibaculum lavamentivorans (strain DS-1 / DSM 13023 / NCIMB 13966).